The primary structure comprises 864 residues: Structure-specific endonuclease subunit SLX4 (864 aa).

Disordered regions lie at residues 1 to 21, 49 to 69, 91 to 113, 161 to 190, 289 to 318, 346 to 385, 413 to 433, and 625 to 767; these read MTTQ…PVIP, LSTS…KTQG, TGTG…PGNA, ANQT…GNDH, LSDD…NRPK, TLLS…NEPP, ANGH…ISNS, and KAPN…VTSS. Polar residues predominate over residues 295–306; that stretch reads SSITEDSESATS. Over residues 307–318 the composition is skewed to basic residues; the sequence is KPRRVKAKNRPK. Positions 656 to 668 are enriched in polar residues; that stretch reads QPNSISQKATTQV. Over residues 685-695 the composition is skewed to low complexity; the sequence is VSSRRSTSTSK. Polar residues predominate over residues 743 to 767; that stretch reads PESFNLPTTPLTIRSGKVPSTVTSS.

Belongs to the SLX4 family. As to quaternary structure, forms a heterodimer with SLX1. In terms of processing, phosphorylated in response to DNA damage.

It is found in the nucleus. Functionally, regulatory subunit of the SLX1-SLX4 structure-specific endonuclease that resolves DNA secondary structures generated during DNA repair and recombination. Has endonuclease activity towards branched DNA substrates, introducing single-strand cuts in duplex DNA close to junctions with ss-DNA. The polypeptide is Structure-specific endonuclease subunit SLX4 (Paracoccidioides lutzii (strain ATCC MYA-826 / Pb01) (Paracoccidioides brasiliensis)).